A 137-amino-acid polypeptide reads, in one-letter code: Small ribosomal subunit protein uS12 (137 aa).

The tract at residues 1–26 is disordered; that stretch reads MPTINQLVRKPRQSKIKKSTSPALNK. Residues 9–18 show a composition bias toward basic residues; sequence RKPRQSKIKK.

Belongs to the universal ribosomal protein uS12 family. Part of the 30S ribosomal subunit. Contacts proteins S8 and S17. May interact with IF1 in the 30S initiation complex.

In terms of biological role, with S4 and S5 plays an important role in translational accuracy. Interacts with and stabilizes bases of the 16S rRNA that are involved in tRNA selection in the A site and with the mRNA backbone. Located at the interface of the 30S and 50S subunits, it traverses the body of the 30S subunit contacting proteins on the other side and probably holding the rRNA structure together. The combined cluster of proteins S8, S12 and S17 appears to hold together the shoulder and platform of the 30S subunit. The sequence is that of Small ribosomal subunit protein uS12 from Listeria innocua serovar 6a (strain ATCC BAA-680 / CLIP 11262).